Here is a 320-residue protein sequence, read N- to C-terminus: 1-aminocyclopropane-1-carboxylate oxidase 3 (320 aa).

Residues 154–254 enclose the Fe2OG dioxygenase domain; the sequence is PNFGTKVSNY…RMSIASFYNP (101 aa). Fe cation is bound by residues His-178, Asp-180, and His-235.

The protein belongs to the iron/ascorbate-dependent oxidoreductase family. Fe cation serves as cofactor. As to expression, flowers.

The enzyme catalyses 1-aminocyclopropane-1-carboxylate + L-ascorbate + O2 = ethene + L-dehydroascorbate + hydrogen cyanide + CO2 + 2 H2O. The protein operates within alkene biosynthesis; ethylene biosynthesis via S-adenosyl-L-methionine; ethylene from S-adenosyl-L-methionine: step 2/2. The sequence is that of 1-aminocyclopropane-1-carboxylate oxidase 3 (ACO3) from Cucumis melo (Muskmelon).